A 409-amino-acid chain; its full sequence is MDKVIFMVDMESFFASVERANHPELSGRPLLVSGDPERRSGVILAACPVAKARGVTNGERLWEAQQKCPEAVVVRPHMQQYVTVSVQITEILERFTDLIEPFSIDEQFMDVTHSQRLFGAPREIAQKVQQAIWHETGVRARIGMGESKVLAKMACDNFAKKMPSGVFHLTKERMERLLWPLPIECLYGVGRQMTKYFRNQGIRTIGQLANTSLERIKGKWGVNGHVLWLTAHGIDPSPVTPHSHDKQKGIGHGMTLPHDYVKAEDIHVVLLELCEEVCKRARRAHLMGRTVAIGVSGANMETPTGFHRQMKLTNHTNITMEVYEGAATLFERFWDGKPIRRLHVNLSNLTSDEAWQLSFFGNRDRAHQLGYTMDTIKEKFGDTAIRRAVSFLSASQAEERAKKIGGHYK.

The region spanning 5–190 is the UmuC domain; that stretch reads IFMVDMESFF…LPIECLYGVG (186 aa). Positions 9 and 105 each coordinate Mg(2+). E106 is a catalytic residue.

Belongs to the DNA polymerase type-Y family. As to quaternary structure, monomer. The cofactor is Mg(2+).

It localises to the cytoplasm. The catalysed reaction is DNA(n) + a 2'-deoxyribonucleoside 5'-triphosphate = DNA(n+1) + diphosphate. In terms of biological role, poorly processive, error-prone DNA polymerase involved in untargeted mutagenesis. Copies undamaged DNA at stalled replication forks, which arise in vivo from mismatched or misaligned primer ends. These misaligned primers can be extended by PolIV. Exhibits no 3'-5' exonuclease (proofreading) activity. May be involved in translesional synthesis, in conjunction with the beta clamp from PolIII. The chain is DNA polymerase IV 2 (dinB2) from Halalkalibacterium halodurans (strain ATCC BAA-125 / DSM 18197 / FERM 7344 / JCM 9153 / C-125) (Bacillus halodurans).